Here is a 159-residue protein sequence, read N- to C-terminus: Ribosomal RNA large subunit methyltransferase H (159 aa).

S-adenosyl-L-methionine-binding positions include L76, G108, and F127–F132.

This sequence belongs to the RNA methyltransferase RlmH family. Homodimer.

It is found in the cytoplasm. The catalysed reaction is pseudouridine(1915) in 23S rRNA + S-adenosyl-L-methionine = N(3)-methylpseudouridine(1915) in 23S rRNA + S-adenosyl-L-homocysteine + H(+). Functionally, specifically methylates the pseudouridine at position 1915 (m3Psi1915) in 23S rRNA. This Clostridium botulinum (strain Langeland / NCTC 10281 / Type F) protein is Ribosomal RNA large subunit methyltransferase H.